A 117-amino-acid polypeptide reads, in one-letter code: Fluoride-specific ion channel FluC 2 (117 aa).

The next 4 membrane-spanning stretches (helical) occupy residues 1–21 (MISIILVMIGGGFGAIARSAI), 33–53 (LPIATLIVNLVGSFLIGLTIG), 60–80 (WFPAFFVTGFLGGLTTFSTLA), and 95–115 (LFLNYSLLQFIIGFIACYIGY). G71 and T74 together coordinate Na(+).

The protein belongs to the fluoride channel Fluc/FEX (TC 1.A.43) family.

The protein localises to the cell membrane. The enzyme catalyses fluoride(in) = fluoride(out). Its activity is regulated as follows. Na(+) is not transported, but it plays an essential structural role and its presence is essential for fluoride channel function. In terms of biological role, fluoride-specific ion channel. Important for reducing fluoride concentration in the cell, thus reducing its toxicity. This Staphylococcus aureus (strain COL) protein is Fluoride-specific ion channel FluC 2.